Here is a 20-residue protein sequence, read N- to C-terminus: Non-specific lipid-transfer protein (20 aa).

The protein belongs to the plant LTP family. As to expression, leaf.

Its function is as follows. Plant non-specific lipid-transfer proteins transfer phospholipids as well as galactolipids across membranes. May play a role in wax or cutin deposition in the cell walls of expanding epidermal cells and certain secretory tissues. This Cannabis sativa (Hemp) protein is Non-specific lipid-transfer protein.